Here is a 128-residue protein sequence, read N- to C-terminus: Large ribosomal subunit protein uL22 (128 aa).

The protein belongs to the universal ribosomal protein uL22 family. Part of the 50S ribosomal subunit.

In terms of biological role, this protein binds specifically to 23S rRNA; its binding is stimulated by other ribosomal proteins, e.g. L4, L17, and L20. It is important during the early stages of 50S assembly. It makes multiple contacts with different domains of the 23S rRNA in the assembled 50S subunit and ribosome. Its function is as follows. The globular domain of the protein is located near the polypeptide exit tunnel on the outside of the subunit, while an extended beta-hairpin is found that lines the wall of the exit tunnel in the center of the 70S ribosome. This is Large ribosomal subunit protein uL22 from Prochlorococcus marinus (strain AS9601).